The sequence spans 428 residues: Putative zinc metalloprotease SAS1196 (428 aa).

His-21 provides a ligand contact to Zn(2+). Residue Glu-22 is part of the active site. Residue His-25 participates in Zn(2+) binding. The next 4 helical transmembrane spans lie at 172 to 194, 309 to 331, 352 to 374, and 401 to 420; these read FLTLFAGPLFNFILALVLFIGLA, GSTLIFTAVVGMLASIFTGGFSF, IISLIGYTALLSVNLGIMNLIPI, and TTIIAIGAIFMVVIMILVTW. One can recognise a PDZ domain in the interval 186–269; the sequence is ALVLFIGLAY…TKSVELTPKK (84 aa).

The protein belongs to the peptidase M50B family. It depends on Zn(2+) as a cofactor.

The protein localises to the cell membrane. The protein is Putative zinc metalloprotease SAS1196 of Staphylococcus aureus (strain MSSA476).